The chain runs to 233 residues: Large ribosomal subunit protein uL1 (233 aa).

The protein belongs to the universal ribosomal protein uL1 family. As to quaternary structure, part of the 50S ribosomal subunit.

Functionally, binds directly to 23S rRNA. The L1 stalk is quite mobile in the ribosome, and is involved in E site tRNA release. Protein L1 is also a translational repressor protein, it controls the translation of the L11 operon by binding to its mRNA. The polypeptide is Large ribosomal subunit protein uL1 (Marinomonas sp. (strain MWYL1)).